A 615-amino-acid chain; its full sequence is DNA mismatch repair protein MutL (615 aa).

Residues 363–397 are disordered; that stretch reads FAEPAVREPVAPRYTPAPASGSRPAAPWPNAQPGY. Over residues 378 to 391 the composition is skewed to low complexity; it reads PAPASGSRPAAPWP.

It belongs to the DNA mismatch repair MutL/HexB family.

Functionally, this protein is involved in the repair of mismatches in DNA. It is required for dam-dependent methyl-directed DNA mismatch repair. May act as a 'molecular matchmaker', a protein that promotes the formation of a stable complex between two or more DNA-binding proteins in an ATP-dependent manner without itself being part of a final effector complex. This is DNA mismatch repair protein MutL from Escherichia coli O157:H7.